The chain runs to 463 residues: Elongation factor 1-alpha (463 aa).

Residues 5 to 242 (KVHINIVVIG…DSIIPPQRPT (238 aa)) enclose the tr-type G domain. Residues 14–21 (GHVDSGKS) are G1. A GTP-binding site is contributed by 14–21 (GHVDSGKS). The tract at residues 70 to 74 (GITID) is G2. Residues 91-94 (DAPG) form a G3 region. GTP is bound by residues 91–95 (DAPGH) and 153–156 (NKMD). The tract at residues 153-156 (NKMD) is G4. A G5 region spans residues 194–196 (SGF). 5-glutamyl glycerylphosphorylethanolamine is present on residues glutamate 301 and glutamate 374. The disordered stretch occupies residues 443–463 (KSDGSSGKVTKSAQKAAPKKK). A compositionally biased stretch (polar residues) spans 446-455 (GSSGKVTKSA).

It belongs to the TRAFAC class translation factor GTPase superfamily. Classic translation factor GTPase family. EF-Tu/EF-1A subfamily.

It is found in the cytoplasm. This protein promotes the GTP-dependent binding of aminoacyl-tRNA to the A-site of ribosomes during protein biosynthesis. This is Elongation factor 1-alpha from Caenorhabditis elegans.